Reading from the N-terminus, the 220-residue chain is Fructose-6-phosphate aldolase 2 (220 aa).

Catalysis depends on lysine 85, which acts as the Schiff-base intermediate with substrate.

It belongs to the transaldolase family. Type 3A subfamily. Homodecamer.

The protein localises to the cytoplasm. It catalyses the reaction beta-D-fructose 6-phosphate = dihydroxyacetone + D-glyceraldehyde 3-phosphate. Its function is as follows. Catalyzes the reversible formation of fructose 6-phosphate from dihydroxyacetone and D-glyceraldehyde 3-phosphate via an aldolization reaction. In Escherichia coli O6:H1 (strain CFT073 / ATCC 700928 / UPEC), this protein is Fructose-6-phosphate aldolase 2 (fsaB).